The following is a 753-amino-acid chain: 5-methyltetrahydropteroyltriglutamate--homocysteine methyltransferase (753 aa).

Residues 17–20 and lysine 117 each bind 5-methyltetrahydropteroyltri-L-glutamate; that span reads RELK. L-homocysteine-binding positions include 431–433 and glutamate 484; that span reads IGS. L-methionine contacts are provided by residues 431–433 and glutamate 484; that span reads IGS. 5-methyltetrahydropteroyltri-L-glutamate is bound by residues 515 to 516 and tryptophan 561; that span reads RC. Aspartate 599 is an L-homocysteine binding site. Residue aspartate 599 participates in L-methionine binding. Glutamate 605 is a binding site for 5-methyltetrahydropteroyltri-L-glutamate. 3 residues coordinate Zn(2+): histidine 641, cysteine 643, and glutamate 665. Histidine 694 functions as the Proton donor in the catalytic mechanism. Residue cysteine 726 coordinates Zn(2+).

The protein belongs to the vitamin-B12 independent methionine synthase family. It depends on Zn(2+) as a cofactor.

It carries out the reaction 5-methyltetrahydropteroyltri-L-glutamate + L-homocysteine = tetrahydropteroyltri-L-glutamate + L-methionine. It participates in amino-acid biosynthesis; L-methionine biosynthesis via de novo pathway; L-methionine from L-homocysteine (MetE route): step 1/1. Its function is as follows. Catalyzes the transfer of a methyl group from 5-methyltetrahydrofolate to homocysteine resulting in methionine formation. In Escherichia coli O139:H28 (strain E24377A / ETEC), this protein is 5-methyltetrahydropteroyltriglutamate--homocysteine methyltransferase.